Here is a 753-residue protein sequence, read N- to C-terminus: Polyribonucleotide nucleotidyltransferase (753 aa).

Mg(2+)-binding residues include D488 and D494. Residues 555 to 614 (PRLLRTKISPDKIGALIGPGGKNIRGIQETTGAVIEVDDEGTVLVASSNKESAQEAMRQV) enclose the KH domain. The S1 motif domain maps to 624–692 (GKIYDGTVSS…EHDRVKLSRR (69 aa)). Positions 698-719 (LGEEDPLAVEGEGGGDSEGGGD) are enriched in acidic residues. The interval 698–753 (LGEEDPLAVEGEGGGDSEGGGDGEDRPRRRRGGSGGGGGGGRGRGPRRSGGGRDRD) is disordered. Residues 730–740 (GSGGGGGGGRG) show a composition bias toward gly residues.

Belongs to the polyribonucleotide nucleotidyltransferase family. It depends on Mg(2+) as a cofactor.

It is found in the cytoplasm. The catalysed reaction is RNA(n+1) + phosphate = RNA(n) + a ribonucleoside 5'-diphosphate. Involved in mRNA degradation. Catalyzes the phosphorolysis of single-stranded polyribonucleotides processively in the 3'- to 5'-direction. The polypeptide is Polyribonucleotide nucleotidyltransferase (Rhodopirellula baltica (strain DSM 10527 / NCIMB 13988 / SH1)).